Here is a 72-residue protein sequence, read N- to C-terminus: Translation initiation factor IF-1 (72 aa).

Positions 1 to 72 (MSKEDVIEVE…TRGRITWRKK (72 aa)) constitute an S1-like domain.

Belongs to the IF-1 family. As to quaternary structure, component of the 30S ribosomal translation pre-initiation complex which assembles on the 30S ribosome in the order IF-2 and IF-3, IF-1 and N-formylmethionyl-tRNA(fMet); mRNA recruitment can occur at any time during PIC assembly.

It localises to the cytoplasm. One of the essential components for the initiation of protein synthesis. Stabilizes the binding of IF-2 and IF-3 on the 30S subunit to which N-formylmethionyl-tRNA(fMet) subsequently binds. Helps modulate mRNA selection, yielding the 30S pre-initiation complex (PIC). Upon addition of the 50S ribosomal subunit IF-1, IF-2 and IF-3 are released leaving the mature 70S translation initiation complex. The protein is Translation initiation factor IF-1 of Alkaliphilus metalliredigens (strain QYMF).